We begin with the raw amino-acid sequence, 128 residues long: Fruiting body differentiation protein 16 (128 aa).

An N-terminal signal peptide occupies residues 1–19 (MLFSHIVFVALSVFGLVQA).

Functionally, plays a role in the regulation of fruiting body development. In Flammulina velutipes (Agaricus velutipes), this protein is Fruiting body differentiation protein 16.